The primary structure comprises 553 residues: Chaperonin GroEL (553 aa).

ATP-binding positions include 29–32 (TLGP), Lys50, 86–90 (DGTTT), Gly424, and Asp504.

The protein belongs to the chaperonin (HSP60) family. In terms of assembly, forms a cylinder of 14 subunits composed of two heptameric rings stacked back-to-back. Interacts with the co-chaperonin GroES.

Its subcellular location is the cytoplasm. The catalysed reaction is ATP + H2O + a folded polypeptide = ADP + phosphate + an unfolded polypeptide.. In terms of biological role, together with its co-chaperonin GroES, plays an essential role in assisting protein folding. The GroEL-GroES system forms a nano-cage that allows encapsulation of the non-native substrate proteins and provides a physical environment optimized to promote and accelerate protein folding. The polypeptide is Chaperonin GroEL (Koribacter versatilis (strain Ellin345)).